Consider the following 288-residue polypeptide: Hydroxyethylthiazole kinase (288 aa).

Met55 contacts substrate. ATP contacts are provided by Asn131 and Ser177. Gly204 lines the substrate pocket.

It belongs to the Thz kinase family. Mg(2+) serves as cofactor.

It catalyses the reaction 5-(2-hydroxyethyl)-4-methylthiazole + ATP = 4-methyl-5-(2-phosphooxyethyl)-thiazole + ADP + H(+). Its pathway is cofactor biosynthesis; thiamine diphosphate biosynthesis; 4-methyl-5-(2-phosphoethyl)-thiazole from 5-(2-hydroxyethyl)-4-methylthiazole: step 1/1. Its function is as follows. Catalyzes the phosphorylation of the hydroxyl group of 4-methyl-5-beta-hydroxyethylthiazole (THZ). This chain is Hydroxyethylthiazole kinase, found in Haloquadratum walsbyi (strain DSM 16790 / HBSQ001).